The primary structure comprises 266 residues: Electron transfer flavoprotein subunit beta (266 aa).

This sequence belongs to the ETF beta-subunit/FixA family. As to quaternary structure, heterodimer of an alpha and a beta subunit. FAD is required as a cofactor. Requires AMP as cofactor.

Functionally, the electron transfer flavoprotein serves as a specific electron acceptor for other dehydrogenases. It transfers the electrons to the main respiratory chain via ETF-ubiquinone oxidoreductase (ETF dehydrogenase). The protein is Electron transfer flavoprotein subunit beta (etfB) of Mycobacterium leprae (strain TN).